A 735-amino-acid chain; its full sequence is Alpha-adducin (735 aa).

An N-acetylmethionine modification is found at Met-1. A compositionally biased stretch (low complexity) spans 1-11 (MNGDTRAAVVT). Positions 1-21 (MNGDTRAAVVTSPPPTTAPHK) are disordered. Ser-12 carries the phosphoserine modification. A Phosphoserine; by PKA modification is found at Ser-59. Ser-64 is modified (phosphoserine). Thr-331 is subject to Phosphothreonine. Residues Ser-334, Ser-353, and Ser-355 each carry the phosphoserine modification. Thr-358 is modified (phosphothreonine). 2 positions are modified to phosphoserine: Ser-364 and Ser-366. Position 408 is a phosphoserine; by PKA (Ser-408). Disordered regions lie at residues 418–486 (GHSF…SAVP) and 576–735 (RREV…KSDS). Ser-427 carries the phosphoserine modification. The residue at position 429 (Thr-429) is a Phosphothreonine. Ser-431 is subject to Phosphoserine. The residue at position 436 (Ser-436) is a Phosphoserine; by PKA. Thr-445 carries the phosphothreonine; by ROCK2 modification. Phosphoserine is present on residues Ser-464 and Ser-465. Phosphothreonine; by ROCK2 is present on Thr-480. Phosphoserine; by PKA is present on Ser-481. Positions 576–601 (RREVERKQKGSEENLDETREQKEKSP) are enriched in basic and acidic residues. Phosphoserine occurs at positions 586, 600, and 605. Thr-610 is modified (phosphothreonine). Residue Ser-613 is modified to Phosphoserine. At Thr-614 the chain carries Phosphothreonine. Residues 678–712 (EPASASAPGAEEVASPATEEGSPMDPGSDGSPGKS) show a composition bias toward low complexity. 3 positions are modified to phosphoserine: Ser-705, Ser-708, and Ser-712. The span at 713 to 735 (PSKKKKKFRTPSFLKKSKKKSDS) shows a compositional bias: basic residues. Ser-714 is modified (phosphoserine; by PKC). The interaction with calmodulin stretch occupies residues 715–732 (KKKKKFRTPSFLKKSKKK). Phosphoserine; by PKA and PKC is present on Ser-724.

This sequence belongs to the aldolase class II family. Adducin subfamily. In terms of assembly, heterodimer of an alpha and a beta subunit or an alpha and a gamma subunit.

The protein localises to the cytoplasm. Its subcellular location is the cytoskeleton. It localises to the cell membrane. Functionally, membrane-cytoskeleton-associated protein that promotes the assembly of the spectrin-actin network. Binds to calmodulin. This is Alpha-adducin (Add1) from Rattus norvegicus (Rat).